A 77-amino-acid polypeptide reads, in one-letter code: U14-theraphotoxin-Cg1b (77 aa).

Residues 1-21 form the signal peptide; that stretch reads MKTSVLLVILGIAAITVQCTA. The propeptide occupies 22 to 49; the sequence is SESVEQDSLRTFVDAVLGWNAEMASEAR. Cystine bridges form between cysteine 50–cysteine 64, cysteine 57–cysteine 69, and cysteine 63–cysteine 75.

This sequence belongs to the neurotoxin 10 (Hwtx-1) family. 65 (Jztx-21) subfamily. Expressed by the venom gland.

It localises to the secreted. Its function is as follows. Probable ion channel inhibitor. This Chilobrachys guangxiensis (Chinese earth tiger tarantula) protein is U14-theraphotoxin-Cg1b.